Consider the following 153-residue polypeptide: Deoxyuridine 5'-triphosphate nucleotidohydrolase (153 aa).

Residues R71 to G73, N84, T88 to D90, and K98 each bind substrate.

It belongs to the dUTPase family. Mg(2+) is required as a cofactor.

The catalysed reaction is dUTP + H2O = dUMP + diphosphate + H(+). It functions in the pathway pyrimidine metabolism; dUMP biosynthesis; dUMP from dCTP (dUTP route): step 2/2. Its function is as follows. This enzyme is involved in nucleotide metabolism: it produces dUMP, the immediate precursor of thymidine nucleotides and it decreases the intracellular concentration of dUTP so that uracil cannot be incorporated into DNA. This chain is Deoxyuridine 5'-triphosphate nucleotidohydrolase, found in Wolbachia pipientis subsp. Culex pipiens (strain wPip).